We begin with the raw amino-acid sequence, 159 residues long: Large ribosomal subunit protein uL23m (159 aa).

This sequence belongs to the universal ribosomal protein uL23 family. As to quaternary structure, component of the mitochondrial ribosome large subunit (39S) which comprises a 16S rRNA and about 50 distinct proteins.

The protein localises to the mitochondrion. The chain is Large ribosomal subunit protein uL23m (mrpl-23) from Caenorhabditis briggsae.